The sequence spans 261 residues: Calbindin (261 aa).

Residue Ala-2 is modified to N-acetylalanine. The interval 2–7 (AESHLQ) is interaction with RANBP9. EF-hand domains follow at residues 11 to 46 (ITASQFFEIWLHFDADGSGYLEGKELQNLIQELQQA), 53 to 88 (ELSPEMKTFVDQYGQRDDGKIGIVELAHVLPTEENF), 98 to 133 (KSCEEFMKTWRKYDTDHSGFIETEELKNFLKDLLEK), 142 to 177 (KLAEYTDLMLKLFDSNNDGKLELTEMARLLPVQENF), and 186 to 221 (MCGKEFNKAFELYDQDGNGYIDENELDALLKDLCEK). Residues Asp-24, Asp-26, Ser-28, Tyr-30, and Glu-35 each coordinate Ca(2+). Asp-111, Asp-113, Ser-115, Glu-122, Asp-155, Asn-157, Asp-159, Lys-161, Glu-166, Asp-199, Asp-201, Asn-203, Tyr-205, and Glu-210 together coordinate Ca(2+).

This sequence belongs to the calbindin family. Interacts with RANBP9.

Its function is as follows. Buffers cytosolic calcium. May stimulate a membrane Ca(2+)-ATPase and a 3',5'-cyclic nucleotide phosphodiesterase. The polypeptide is Calbindin (CALB1) (Homo sapiens (Human)).